A 480-amino-acid chain; its full sequence is 2-phosphoxylose phosphatase 1 (480 aa).

Residues 1–6 (MLYRNR) are Cytoplasmic-facing. Residues 7-27 (FLVLLALAGLLAFLSLSLQFF) traverse the membrane as a helical; Signal-anchor for type II membrane protein segment. At 28–480 (HLIPVSTTKN…YYDACHGEGA (453 aa)) the chain is on the lumenal side. His97 (nucleophile) is an active-site residue. Residues Asn194, Asn305, and Asn354 are each glycosylated (N-linked (GlcNAc...) asparagine). Asp379 (proton donor) is an active-site residue.

It belongs to the histidine acid phosphatase family. As to quaternary structure, interacts with B3GAT3; the interaction increases the 2-phosphoxylose phosphatase activity of PXYLP1 during completion of linkage region formation in a B3GAT3-mediated manner.

It localises to the golgi apparatus membrane. It carries out the reaction 3-O-[beta-D-GlcA-(1-&gt;3)-beta-D-Gal-(1-&gt;3)-beta-D-Gal-(1-&gt;4)-beta-D-2-O-P-Xyl]-L-seryl-[protein] + H2O = 3-O-(beta-D-GlcA-(1-&gt;3)-beta-D-Gal-(1-&gt;3)-beta-D-Gal-(1-&gt;4)-beta-D-Xyl)-L-seryl-[protein] + phosphate. Its function is as follows. Responsible for the 2-O-dephosphorylation of xylose in the glycosaminoglycan-protein linkage region of proteoglycans thereby regulating the amount of mature glycosaminoglycan (GAG) chains. Sulfated glycosaminoglycans (GAGs), including heparan sulfate and chondroitin sulfate, are synthesized on the so-called common GAG-protein linkage region (GlcUAbeta1-3Galbeta1-3Galbeta1-4Xylbeta1-O-Ser) of core proteins, which is formed by the stepwise addition of monosaccharide residues by the respective specific glycosyltransferases. Xylose 2-O-dephosphorylation during completion of linkage region formation is a prerequisite for the initiation and efficient elongation of the repeating disaccharide region of GAG chains. In Rattus norvegicus (Rat), this protein is 2-phosphoxylose phosphatase 1.